Consider the following 392-residue polypeptide: MDALVEDDICILNHEKAHKRDTVTPVSIYSGDESVASHFALVTAYEDIKKRLKDSEKENSLLKKRIRFLEEKLIARFEEETSSVGREQVNKAYHAYREVCIDRDNLKSKLDKMNKDNSESLKVLNEQLQSKEVELLQLRTEVETQQVMRNLNPPSSNWEVEKLSCDLKIHGLEQELELMRKECSDLKIELQKAKQTDPYQEDNLKSRDLQKLSISSDNMQHAYWELKREMSNLHLVTQVQAELLRKLKTSTAIKKACAPVGCSEDLGRDSTKLHLMNFTATYTRHPPLLPNGKALCHTTSSPLPGDVKVLSEKAILQSWTDNERSIPNDGTCFQEHSSYGRNSLEDNSWVFPSPPKSSETAFGETKTKTLPLPNLPPLHYLDQHNQNCLYKN.

Residues 1–197 (MDALVEDDIC…IELQKAKQTD (197 aa)) are homodimerization. Coiled coils occupy residues 40 to 76 (ALVT…LIAR) and 102 to 196 (DRDN…AKQT). The tract at residues 216–257 (SDNMQHAYWELKREMSNLHLVTQVQAELLRKLKTSTAIKKAC) is interaction with TBK1 and IKBKE. Phosphoserine is present on residues S318 and S353.

As to quaternary structure, homodimer. Interacts with IKBKE. Interacts with TBK1. Interacts with TICAM1. Interacts with TAX1BP1. Interacts with CALCOCO2. In terms of assembly, (Microbial infection) Interacts with vaccinia virus protein C6. Ubiquitinated via 'Lys-48'-linked polyubiquitination by TRIM38, leading to its degradation. In terms of tissue distribution, widely expressed. Abundant expression seen in the pancreas and testis.

The protein localises to the cytoplasm. Adapter protein which binds TBK1 and IKBKE playing a role in antiviral innate immunity. Activates serine/threonine-protein kinase TBK1 and facilitates its oligomerization. Enhances the phosphorylation of NF-kappa-B p65 subunit RELA by TBK1. Promotes TBK1-induced as well as TNF-alpha or PMA-induced activation of NF-kappa-B. Participates in IFNB promoter activation via TICAM1. The protein is 5-azacytidine-induced protein 2 (AZI2) of Homo sapiens (Human).